Reading from the N-terminus, the 95-residue chain is uncharacterized protein (95 aa).

The chain crosses the membrane as a helical span at residues 29–53 (LVSTATCMAALFLRFKLIAWVAFIL).

It is found in the membrane. This is an uncharacterized protein from Schizosaccharomyces pombe (strain 972 / ATCC 24843) (Fission yeast).